Consider the following 163-residue polypeptide: Ribonuclease H (163 aa).

Residues 4–146 (SPKKVLIYTD…CDRLAVRASQ (143 aa)) form the RNase H type-1 domain. 4 residues coordinate Mg(2+): Asp13, Glu51, Asp73, and Asp138.

This sequence belongs to the RNase H family. In terms of assembly, monomer. Requires Mg(2+) as cofactor.

Its subcellular location is the cytoplasm. It catalyses the reaction Endonucleolytic cleavage to 5'-phosphomonoester.. Its function is as follows. Endonuclease that specifically degrades the RNA of RNA-DNA hybrids. The sequence is that of Ribonuclease H from Rippkaea orientalis (strain PCC 8801 / RF-1) (Cyanothece sp. (strain PCC 8801)).